The following is a 174-amino-acid chain: RNA pyrophosphohydrolase (174 aa).

A Nudix hydrolase domain is found at G6–K149. A Nudix box motif is present at residues G38 to G59.

The protein belongs to the Nudix hydrolase family. RppH subfamily. A divalent metal cation serves as cofactor.

Functionally, accelerates the degradation of transcripts by removing pyrophosphate from the 5'-end of triphosphorylated RNA, leading to a more labile monophosphorylated state that can stimulate subsequent ribonuclease cleavage. This is RNA pyrophosphohydrolase from Shewanella loihica (strain ATCC BAA-1088 / PV-4).